The primary structure comprises 248 residues: NADP-dependent 3-hydroxy acid dehydrogenase YdfG (248 aa).

NADP(+) is bound by residues 7–12 (GATAGF), 32–33 (RR), 54–55 (DV), and Asn81. Ser134 contacts substrate. NADP(+)-binding positions include Tyr147, Lys151, and 177–185 (PGLVGGTEF). Catalysis depends on Tyr147, which acts as the Proton acceptor.

This sequence belongs to the short-chain dehydrogenases/reductases (SDR) family. As to quaternary structure, homotetramer.

It catalyses the reaction 3-hydroxypropanoate + NADP(+) = 3-oxopropanoate + NADPH + H(+). The catalysed reaction is L-allo-threonine + NADP(+) = aminoacetone + CO2 + NADPH. Its function is as follows. NADP-dependent dehydrogenase with broad substrate specificity acting on 3-hydroxy acids. Catalyzes the NADP-dependent oxidation of L-allo-threonine to L-2-amino-3-keto-butyrate, which is spontaneously decarboxylated into aminoacetone. Also acts on D-threonine, L-serine, D-serine, D-3-hydroxyisobutyrate, L-3-hydroxyisobutyrate, D-glycerate and L-glycerate. Able to catalyze the reduction of the malonic semialdehyde to 3-hydroxypropionic acid. YdfG is apparently supplementing RutE, the presumed malonic semialdehyde reductase involved in pyrimidine degradation since both are able to detoxify malonic semialdehyde. This is NADP-dependent 3-hydroxy acid dehydrogenase YdfG from Shigella flexneri.